We begin with the raw amino-acid sequence, 2646 residues long: Probable helicase senataxin (2646 aa).

Serine 102 is subject to Phosphoserine. Residue lysine 339 forms a Glycyl lysine isopeptide (Lys-Gly) (interchain with G-Cter in SUMO1) linkage. Serine 640 is subject to Phosphoserine. Disordered stretches follow at residues 705–734 (KISAEKSGKESSSYAPSNSTSRNGPEWGCD) and 825–876 (GGAL…DDED). The segment covering 714–727 (ESSSYAPSNSTSRN) has biased composition (polar residues). Positions 867-876 (LDNSSSDDED) are enriched in acidic residues. Phosphoserine is present on residues serine 870, serine 871, serine 872, serine 938, serine 1002, and serine 1004. Residues 1001-1023 (ISDSDEEEDEDEDERSSSEENIK) are disordered. Acidic residues predominate over residues 1003 to 1014 (DSDEEEDEDEDE). Lysine 1051 is covalently cross-linked (Glycyl lysine isopeptide (Lys-Gly) (interchain with G-Cter in SUMO2)). The segment covering 1122-1133 (RNKAEGVKEHAG) has biased composition (basic and acidic residues). The segment at 1122 to 1245 (RNKAEGVKEH…DTRRGQSKSS (124 aa)) is disordered. Over residues 1147–1156 (GVKKPKRKRY) the composition is skewed to basic residues. Residues 1176-1189 (LPDRRDLTESDLKS) are compositionally biased toward basic and acidic residues. Positions 1196–1211 (TPSSSVERDSTILQKS) are enriched in polar residues. Residues 1212–1222 (TKSRTHSKPVR) show a composition bias toward basic residues. Position 1318 is a phosphoserine (serine 1318). Residues lysine 1328, lysine 1329, and lysine 1398 each participate in a glycyl lysine isopeptide (Lys-Gly) (interchain with G-Cter in SUMO2) cross-link. Residue serine 1472 is modified to Phosphoserine. Threonine 1474 carries the post-translational modification Phosphothreonine. The segment at 1591–1627 (LSKSLESTTLQQSALKNKSSGAQPNLKVTPPSSMGSQ) is disordered. Residues 1595-1613 (LESTTLQQSALKNKSSGAQ) show a composition bias toward polar residues. 1939–1946 (GPPGTGKS) contacts ATP. Positions 2046–2063 (KKDLPSHIQEMLRRKEIL) match the Bipartite nuclear localization signal motif. Threonine 2450 carries the post-translational modification Phosphothreonine. Disordered stretches follow at residues 2450–2472 (THPPATAPEAPRPQGGLPSNRLD), 2486–2506 (HTPSDTVTSKGPERPLLQDRL), and 2569–2624 (SHRS…THHV). 2 stretches are compositionally biased toward basic and acidic residues: residues 2496 to 2506 (GPERPLLQDRL) and 2593 to 2608 (KYSDPDAGLSHKREPR). A necessary for nuclear localization region spans residues 2632–2646 (RRRLDDSSAKRRQFL).

It belongs to the DNA2/NAM7 helicase family. As to quaternary structure, homodimer. Interacts with PER2; the interaction inhibits termination of circadian target genes. Interacts with CHD4, POLR2A, PRKDC and TRIM28. Interacts with UBE2I. Interacts (via N-terminus domain) with EXOSC9 (via C-terminus region); the interaction enhances SETX sumoylation. Interacts with NCL (via N-terminus domain). Interacts with PABPN1, PABPC1 and SF3B1. Interacts with SMN1/SMN2 and POLR2A; SMN1/SMN2 recruits SETX to POLR2A. Post-translationally, ubiquitinated. Sumoylated preferentially with SUMO2 or SUMO3. Expressed in cerebellum, hippocampus, olfactory bulb, Bergmann glial fibers, stellate cells and Purkinje cells. Expressed in the epithelial cells of the lens but not in mature lens fiber cells. Expressed in the retina (highly expressed in inner and outer segments of photoreceptors and outer plexiform layer cells but weakly expressed in the inner plexiform and ganglion cell layers). Expressed in the kidney.

It localises to the nucleus. It is found in the nucleoplasm. Its subcellular location is the nucleolus. The protein localises to the cytoplasm. The protein resides in the chromosome. It localises to the telomere. It is found in the cell projection. Its subcellular location is the axon. The protein localises to the growth cone. In terms of biological role, probable RNA/DNA helicase involved in diverse aspects of RNA metabolism and genomic integrity. Plays a role in transcription regulation by its ability to modulate RNA Polymerase II (Pol II) binding to chromatin and through its interaction with proteins involved in transcription. Contributes to the mRNA splicing efficiency and splice site selection. Required for the resolution of R-loop RNA-DNA hybrid formation at G-rich pause sites located downstream of the poly(A) site, allowing XRN2 recruitment and XRN2-mediated degradation of the downstream cleaved RNA and hence efficient RNA polymerase II (RNAp II) transcription termination. Required for the 3' transcriptional termination of PER1 and CRY2, thus playing an important role in the circadian rhythm regulation. Involved in DNA double-strand breaks damage response generated by oxidative stress. In association with RRP45, targets the RNA exosome complex to sites of transcription-induced DNA damage. Plays a role in the development and maturation of germ cells: essential for male meiosis, acting at the interface of transcription and meiotic recombination, and in the process of gene silencing during meiotic sex chromosome inactivation (MSCI). Plays a role in neurite outgrowth in hippocampal cells through FGF8-activated signaling pathways. Inhibits retinoic acid-induced apoptosis. May be involved in telomeric stability through the regulation of telomere repeat-containing RNA (TERRA) transcription. This is Probable helicase senataxin from Mus musculus (Mouse).